The following is a 192-amino-acid chain: MYQDLIRNELNEAAETLANFLKDDANIHAIQRAAVLLADSFKAGGKVLSCGNGGSHCDAMHFAEELTGRYRENRPGYPAIAISDVSHISCVSNDFGYDYIFSRYVEAVGREGDVLLGISTSGNSGNVIKAIAAAREKGMKVITLTGKDGGKMAGTADIEIRVPHFGYADRIQEIHIKVIHILIQLIEKEMVK.

An SIS domain is found at 37–192; that stretch reads LADSFKAGGK…IQLIEKEMVK (156 aa). 52-54 is a binding site for substrate; that stretch reads NGG. The Zn(2+) site is built by histidine 61 and glutamate 65. Residues glutamate 65, 93–94, 119–121, serine 124, and glutamine 172 each bind substrate; these read ND and STS. Glutamine 172 and histidine 180 together coordinate Zn(2+).

It belongs to the SIS family. GmhA subfamily. In terms of assembly, homotetramer. It depends on Zn(2+) as a cofactor.

The protein localises to the cytoplasm. The enzyme catalyses 2 D-sedoheptulose 7-phosphate = D-glycero-alpha-D-manno-heptose 7-phosphate + D-glycero-beta-D-manno-heptose 7-phosphate. The protein operates within carbohydrate biosynthesis; D-glycero-D-manno-heptose 7-phosphate biosynthesis; D-glycero-alpha-D-manno-heptose 7-phosphate and D-glycero-beta-D-manno-heptose 7-phosphate from sedoheptulose 7-phosphate: step 1/1. Catalyzes the isomerization of sedoheptulose 7-phosphate in D-glycero-D-manno-heptose 7-phosphate. This is Phosphoheptose isomerase from Salmonella agona (strain SL483).